A 157-amino-acid polypeptide reads, in one-letter code: N-acetylgalactosamine-specific phosphotransferase enzyme IIB component 2 (157 aa).

The PTS EIIB type-4 domain occupies 1–157; sequence MPNIVLSRID…EPAVDLFKLL (157 aa). Residue H15 is the Pros-phosphohistidine intermediate of the active site.

Its subcellular location is the cytoplasm. Functionally, the phosphoenolpyruvate-dependent sugar phosphotransferase system (sugar PTS), a major carbohydrate active -transport system, catalyzes the phosphorylation of incoming sugar substrates concomitantly with their translocation across the cell membrane. This system is involved in N-acetylgalactosamine transport. This chain is N-acetylgalactosamine-specific phosphotransferase enzyme IIB component 2 (agaV), found in Escherichia coli (strain K12).